A 123-amino-acid polypeptide reads, in one-letter code: UPF0102 protein VSAL_I2655 (123 aa).

This sequence belongs to the UPF0102 family.

In Aliivibrio salmonicida (strain LFI1238) (Vibrio salmonicida (strain LFI1238)), this protein is UPF0102 protein VSAL_I2655.